Consider the following 200-residue polypeptide: Elongation factor Ts (200 aa).

The involved in Mg(2+) ion dislocation from EF-Tu stretch occupies residues 80 to 83 (TDFV).

It belongs to the EF-Ts family.

The protein localises to the cytoplasm. Associates with the EF-Tu.GDP complex and induces the exchange of GDP to GTP. It remains bound to the aminoacyl-tRNA.EF-Tu.GTP complex up to the GTP hydrolysis stage on the ribosome. The polypeptide is Elongation factor Ts (Caldanaerobacter subterraneus subsp. tengcongensis (strain DSM 15242 / JCM 11007 / NBRC 100824 / MB4) (Thermoanaerobacter tengcongensis)).